The primary structure comprises 360 residues: Peptide chain release factor 1 (360 aa).

Gln-235 bears the N5-methylglutamine mark. The tract at residues 284–303 (RERQSKEAAERKSLVGSGDR) is disordered.

The protein belongs to the prokaryotic/mitochondrial release factor family. In terms of processing, methylated by PrmC. Methylation increases the termination efficiency of RF1.

Its subcellular location is the cytoplasm. Peptide chain release factor 1 directs the termination of translation in response to the peptide chain termination codons UAG and UAA. This chain is Peptide chain release factor 1, found in Bordetella avium (strain 197N).